We begin with the raw amino-acid sequence, 586 residues long: Dual specificity tyrosine-phosphorylation-regulated kinase 3 (586 aa).

Residues 1 to 13 (MGGAARDRGRKDA) are compositionally biased toward basic and acidic residues. Residues 1–187 (MGGAARDRGR…QGVIGGPNNG (187 aa)) form a disordered region. One can recognise a Protein kinase domain in the interval 208 to 521 (YEVLKIIGKG…PAQALRHPWI (314 aa)). Residues 214-222 (IGKGSFGQV), lysine 237, and 287-290 (FELL) contribute to the ATP site. Residue aspartate 334 is the Proton acceptor of the active site. At tyrosine 368 the chain carries Phosphotyrosine. Residues 467 to 480 (RSRRGKKRGPPGSK) carry the Nuclear localization signal motif.

Belongs to the protein kinase superfamily. CMGC Ser/Thr protein kinase family. MNB/DYRK subfamily. Interacts with SIRT1. Requires Mg(2+) as cofactor. Ubiquitinated at anaphase by the anaphase-promoting complex (APC/C), leading to its degradation by the proteasome. In terms of processing, protein kinase activity is activated following autophosphorylation at Tyr-368.

The protein localises to the nucleus. Its subcellular location is the cytoplasm. It is found in the nucleus speckle. It localises to the cytoplasmic granule. The protein resides in the cytoskeleton. The protein localises to the microtubule organizing center. Its subcellular location is the centrosome. The enzyme catalyses L-seryl-[protein] + ATP = O-phospho-L-seryl-[protein] + ADP + H(+). The catalysed reaction is L-threonyl-[protein] + ATP = O-phospho-L-threonyl-[protein] + ADP + H(+). It carries out the reaction L-tyrosyl-[protein] + ATP = O-phospho-L-tyrosyl-[protein] + ADP + H(+). With respect to regulation, protein kinase activity is activated following autophosphorylation at Tyr-368. Dual-specificity protein kinase that promotes disassembly of several types of membraneless organelles during mitosis, such as stress granules, nuclear speckles and pericentriolar material. Dual-specificity tyrosine-regulated kinases (DYRKs) autophosphorylate a critical tyrosine residue in their activation loop and phosphorylate their substrate on serine and threonine residues. Acts as a central dissolvase of membraneless organelles during the G2-to-M transition, after the nuclear-envelope breakdown: acts by mediating phosphorylation of multiple serine and threonine residues in unstructured domains of proteins, such as SRRM1 and PCM1. Does not mediate disassembly of all membraneless organelles: disassembly of P-body and nucleolus is not regulated by DYRK3. Dissolution of membraneless organelles at the onset of mitosis is also required to release mitotic regulators, such as ZNF207, from liquid-unmixed organelles where they are sequestered and keep them dissolved during mitosis. Regulates mTORC1 by mediating the dissolution of stress granules: during stressful conditions, DYRK3 partitions from the cytosol to the stress granule, together with mTORC1 components, which prevents mTORC1 signaling. When stress signals are gone, the kinase activity of DYRK3 is required for the dissolution of stress granule and mTORC1 relocation to the cytosol: acts by mediating the phosphorylation of the mTORC1 inhibitor AKT1S1, allowing full reactivation of mTORC1 signaling. Also acts as a negative regulator of EPO-dependent erythropoiesis: may place an upper limit on red cell production during stress erythropoiesis. Inhibits cell death due to cytokine withdrawal in hematopoietic progenitor cells. Promotes cell survival upon genotoxic stress through phosphorylation of SIRT1: this in turn inhibits p53/TP53 activity and apoptosis. This is Dual specificity tyrosine-phosphorylation-regulated kinase 3 from Mus musculus (Mouse).